The primary structure comprises 543 residues: Periplasmic oligopeptide-binding protein OppA (543 aa).

An N-terminal signal peptide occupies residues 1–26; that stretch reads MTNITKRSLVAAGVLAALMAGNVALA. A disulfide bridge connects residues C297 and C443.

This sequence belongs to the bacterial solute-binding protein 5 family. As to quaternary structure, the complex is composed of two ATP-binding proteins (OppD and OppF), two transmembrane proteins (OppB and OppC) and a solute-binding protein (OppA).

It localises to the periplasm. Part of the ABC transporter complex OppABCDF involved in the uptake of oligopeptides. Plays an important nutritional role. Binds peptides containing from two to five amino acid residues. Displays a preference for tripeptides and tetrapeptides over dipeptides and pentapeptides, for peptides composed of L-amino acids and for positively charged peptides. Cannot bind the cell wall peptide L-Ala-D-Gly-gamma-meso-diaminopimelic acid. This chain is Periplasmic oligopeptide-binding protein OppA, found in Escherichia coli (strain K12).